Here is an 836-residue protein sequence, read N- to C-terminus: General negative regulator of transcription subunit 3 (836 aa).

Coiled coils occupy residues 36-68 (NNPS…WQSS), 119-195 (RERR…ANEE), and 255-292 (NTSD…AKNA). Polar residues predominate over residues 252-267 (EDNNTSDANESLQDIS). Disordered regions lie at residues 252 to 284 (EDNN…AKKA), 296 to 391 (AIPV…LKPA), 410 to 471 (AVEK…NTGA), and 513 to 532 (NPKS…PENT). Positions 268–283 (KLSKKEQRKLEREAKK) are enriched in basic and acidic residues. 3 positions are modified to phosphoserine: serine 303, serine 307, and serine 322. Residues 341–386 (SIKSPRSSADNLLPSLQKSPSSATPETPTNVHTHIHQTPNGITGAT) are compositionally biased toward polar residues. Low complexity predominate over residues 418–446 (TSASSTISNTSTKTPTTAAATTTSSNANS). 2 positions are modified to phosphoserine: serine 446 and serine 450. 2 stretches are compositionally biased toward polar residues: residues 447–468 (RIGS…QPDN) and 522–531 (TTVNQNGPEN). A Glycyl lysine isopeptide (Lys-Gly) (interchain with G-Cter in ubiquitin) cross-link involves residue lysine 535. The interval 537–583 (MEQKEEESPEERNKLQVPTFGVFDDDFESDRDSETEPEEEEQPSTPK) is disordered. Over residues 559–578 (FDDDFESDRDSETEPEEEEQ) the composition is skewed to acidic residues. 2 positions are modified to phosphoserine: serine 565 and serine 569. Phosphothreonine is present on threonine 571. Serine 657 carries the post-translational modification Phosphoserine. Positions 803–831 (NVNDQSNVTLEQQKQEISHGKQLLKQLKQ) form a coiled coil.

The protein belongs to the CNOT2/3/5 family. Forms a NOT protein complex that comprises NOT1, NOT2, NOT3, NOT4 and NOT5. Subunit of the 1.0 MDa CCR4-NOT core complex that contains CCR4, CAF1, NOT1, NOT2, NOT3, NOT4, NOT5, CAF40 and CAF130. The core complex probably is part of a less characterized 1.9 MDa CCR4-NOT complex.

It is found in the cytoplasm. The protein resides in the nucleus. Functionally, acts as a component of the CCR4-NOT core complex, which in the nucleus seems to be a general transcription factor, and in the cytoplasm the major mRNA deadenylase involved in mRNA turnover. The NOT protein subcomplex negatively regulates the basal and activated transcription of many genes. Preferentially affects TC-type TATA element-dependent transcription. Could directly or indirectly inhibit component(s) of the general transcription machinery. This is General negative regulator of transcription subunit 3 (NOT3) from Saccharomyces cerevisiae (strain ATCC 204508 / S288c) (Baker's yeast).